Consider the following 62-residue polypeptide: MEWLGKYWWVLVLVFLLGVLLNVIKDLKRVDHKKFMDNRPELPPHRDFNDKWDDEDDWPKKK.

A helical membrane pass occupies residues 4–24 (LGKYWWVLVLVFLLGVLLNVI). Residues 36-51 (MDNRPELPPHRDFNDK) show a composition bias toward basic and acidic residues. The interval 36–62 (MDNRPELPPHRDFNDKWDDEDDWPKKK) is disordered. Residues 52–62 (WDDEDDWPKKK) are compositionally biased toward acidic residues.

The protein belongs to the UPF0370 family.

It localises to the cell membrane. The protein is UPF0370 protein ESA_00777 of Cronobacter sakazakii (strain ATCC BAA-894) (Enterobacter sakazakii).